A 322-amino-acid polypeptide reads, in one-letter code: MHPILKNIRSQPDQGRAEEHNPELHCGIAGTGGLEEQLRSKQREDRFHKACPPAVDLNRDDTQLYGEGERDLRLKSSACVQLDRTPVTPEDFVPDDMGSRAIRQMEAAKLVRNGQHTRDVERWQHDTYCSHLTQLLVRPLTSLGVMYLADFLNTFVELPPNHTLTMQLVTIINHTSEPTLRRLLKDIGEKDAEGHLKNEWLLQLLSIIEMIFKDEPSERARLTALLTVTNEVALNFSKKASGGNYPTTDRLSKTLTYFRRMIVALLALAESLGCYTNNYCARKPEKRCRTQVEPSDESYMFSLKGALEAPESDEEEEEWIRD.

A disordered region spans residues 1–24 (MHPILKNIRSQPDQGRAEEHNPEL). An interaction with packaging protein 1 region spans residues 1-127 (MHPILKNIRS…RDVERWQHDT (127 aa)).

The protein belongs to the adenoviridae packaging protein 3 family. In terms of assembly, part of the genome packaging complex composed of packaging proteins 1, 2 and 3; this complex specifically binds to the packaging sequence on the left end of viral genomic DNA and performs packaging of the viral genome. Interacts with hexon-linking protein IIIa; this interaction is required to promote correct genome packaging. Cleaved at different sites by the viral protease during virion maturation.

Its subcellular location is the host nucleus. Involved in viral genome packaging through its interaction with packaging proteins 1 and 2. After proteolytic cleavage by adenovirus protease, L1 52/55k protein is removed from the capsid during viral maturation. This is Packaging protein 3 from Pantherophis guttatus (Corn snake).